The chain runs to 444 residues: Acyl-CoA (8-3)-desaturase (444 aa).

M1 is modified (N-acetylmethionine). At M1–Q121 the chain is on the cytoplasmic side. The region spanning P17–S94 is the Cytochrome b5 heme-binding domain. Residues M122 to L142 traverse the membrane as a helical segment. Topologically, residues D143 to A146 are lumenal. The chain crosses the membrane as a helical span at residues W147 to L167. The Cytoplasmic segment spans residues T168–F267. Positions H179 to H183 match the Histidine box-1 motif. The Histidine box-2 motif lies at H216 to H220. A helical membrane pass occupies residues L268 to I288. Topologically, residues Q289 to R305 are lumenal. Residues L306–V326 traverse the membrane as a helical segment. At R327–Q444 the chain is on the cytoplasmic side. The Histidine box-3 signature appears at Q382–H386.

The protein belongs to the fatty acid desaturase type 1 family. In terms of tissue distribution, widely expressed. Expressed in brain, liver and thymus (at protein level). Isoform 1 seems to be more abundant than isoform 2. Expression of isoform 2 is very low in spleen and not detectable in skeletal muscle.

Its subcellular location is the endoplasmic reticulum membrane. The protein resides in the mitochondrion. It catalyses the reaction (8Z,11Z,14Z)-eicosatrienoyl-CoA + 2 Fe(II)-[cytochrome b5] + O2 + 2 H(+) = (5Z,8Z,11Z,14Z)-eicosatetraenoyl-CoA + 2 Fe(III)-[cytochrome b5] + 2 H2O. It carries out the reaction (8Z,11Z,14Z,17Z)-eicosatetraenoyl-CoA + 2 Fe(II)-[cytochrome b5] + O2 + 2 H(+) = (5Z,8Z,11Z,14Z,17Z)-eicosapentaenoyl-CoA + 2 Fe(III)-[cytochrome b5] + 2 H2O. The enzyme catalyses (11E)-octadecenoyl-CoA + 2 Fe(II)-[cytochrome b5] + O2 + 2 H(+) = (5Z,11E)-octadecadienoyl-CoA + 2 Fe(III)-[cytochrome b5] + 2 H2O. The protein operates within lipid metabolism; polyunsaturated fatty acid biosynthesis. Functionally, acts as a front-end fatty acyl-coenzyme A (CoA) desaturase that introduces a cis double bond at carbon 5 located between a preexisting double bond and the carboxyl end of the fatty acyl chain. Involved in biosynthesis of highly unsaturated fatty acids (HUFA) from the essential polyunsaturated fatty acids (PUFA) linoleic acid (LA) (18:2n-6) and alpha-linolenic acid (ALA) (18:3n-3) precursors. Specifically, desaturates dihomo-gamma-linoleoate (DGLA) (20:3n-6) and eicosatetraenoate (ETA) (20:4n-3) to generate arachidonate (AA) (20:4n-6) and eicosapentaenoate (EPA) (20:5n-3), respectively. As a rate limiting enzyme for DGLA (20:3n-6) and AA (20:4n-6)-derived eicosanoid biosynthesis, controls the metabolism of inflammatory lipids like prostaglandin E2, critical for efficient acute inflammatory response and maintenance of epithelium homeostasis. Contributes to membrane phospholipid biosynthesis by providing AA (20:4n-6) as a major acyl chain esterified into phospholipids. In particular, regulates phosphatidylinositol-4,5-bisphosphate levels, modulating inflammatory cytokine production in T-cells. Also desaturates (11E)-octadecenoate (trans-vaccenoate)(18:1n-9), a metabolite in the biohydrogenation pathway of LA (18:2n-6). In terms of biological role, does not exhibit any catalytic activity toward 20:3n-6, but it may enhance FADS2 activity. The chain is Acyl-CoA (8-3)-desaturase from Papio anubis (Olive baboon).